Here is a 573-residue protein sequence, read N- to C-terminus: MQWLKSFQICKVLQGFSLSPTQLHRRLFSRVGAPRWNDHDSPEEFNFASDVLDYWAQMEEEGKRGPSPAFWWVNGQGDEIKWSFRKLRDLTCRTANVFEQICGLQQGDHLALILPRVPEWWLVTVGCMRTGIIFMPGTTQLKAKDILYRIQISRAKAIVTTASLVPEVESVASECPDLKTKLVVSDHSHEGWLDFCSLIKSASPDHTCIKSKMKDPMAIFFTSGTTGYPKMAKHNQGLAFRSYIPSCRKLLKLKTSDILWCMSDPGWILATVGCLIEPWTSGCTVFIHHLPQFDPKVIVEVLFKYPITQCLAAPGVYRMVLQQKTSNLRFPTLEHCTTGGESLLPEEYEQWKQRTGLSIHEVYGQSETGISSATLREMKIKRGSIGKAILPFDLQIIDEKGNILPPNTEGYIGIRIKPTRPLGLFMEYENSPESTSEVECGDFYNSGDRATIDEEGYIWFLGRGDDVINASGYRIGPVEVENALAEHPAVAESAVVSSPDKDRGEVVKAFIVLNPEFLSHDQEQLIKELQHHVKSVTAPYKYPRKVEFVSELPKTVTGKIKRKELRNKEFGQL.

Residues 1–35 (MQWLKSFQICKVLQGFSLSPTQLHRRLFSRVGAPR) constitute a mitochondrion transit peptide. Lysine 81 bears the N6-succinyllysine mark. An N6-acetyllysine; alternate modification is found at lysine 142. The residue at position 142 (lysine 142) is an N6-succinyllysine; alternate. Residue lysine 179 is modified to N6-succinyllysine. Lysine 200 bears the N6-acetyllysine; alternate mark. Lysine 200 bears the N6-succinyllysine; alternate mark. N6-acetyllysine is present on lysine 210. 222 to 230 (TSGTTGYPK) is a binding site for ATP. Lysine 233 and lysine 324 each carry N6-succinyllysine. 2 positions are modified to N6-acetyllysine; alternate: lysine 352 and lysine 387. An N6-succinyllysine; alternate mark is found at lysine 352 and lysine 387. ATP is bound by residues aspartate 448 and arginine 463. Lysine 501 bears the N6-succinyllysine mark. An N6-acetyllysine modification is found at lysine 527. Lysine 534 carries the post-translational modification N6-acetyllysine; alternate. Lysine 534 carries the post-translational modification N6-succinyllysine; alternate. The residue at position 545 (lysine 545) is an N6-acetyllysine. Lysine 559 lines the ATP pocket.

This sequence belongs to the ATP-dependent AMP-binding enzyme family. Monomer. Mg(2+) serves as cofactor. Requires Mn(2+) as cofactor. Highly expressed in liver and kidney.

The protein localises to the mitochondrion matrix. Its subcellular location is the mitochondrion. It carries out the reaction a medium-chain fatty acid + ATP + CoA = a medium-chain fatty acyl-CoA + AMP + diphosphate. The catalysed reaction is benzoate + ATP + CoA = benzoyl-CoA + AMP + diphosphate. It catalyses the reaction (R)-lipoate + GTP + H(+) = (R)-lipoyl-GMP + diphosphate. The enzyme catalyses octanoate + ATP + CoA = octanoyl-CoA + AMP + diphosphate. It carries out the reaction decanoate + ATP + CoA = decanoyl-CoA + AMP + diphosphate. The catalysed reaction is dodecanoate + ATP + CoA = dodecanoyl-CoA + AMP + diphosphate. It catalyses the reaction tetradecanoate + ATP + CoA = tetradecanoyl-CoA + AMP + diphosphate. The enzyme catalyses hexanoate + ATP + CoA = hexanoyl-CoA + AMP + diphosphate. It carries out the reaction butanoate + ATP + CoA = butanoyl-CoA + AMP + diphosphate. The catalysed reaction is hexadecanoate + ATP + CoA = hexadecanoyl-CoA + AMP + diphosphate. Its function is as follows. Catalyzes the activation of fatty acids by CoA to produce an acyl-CoA, the first step in fatty acid metabolism. Capable of activating medium-chain fatty acids (e.g. butyric (C4) to decanoic (C10) acids), and certain carboxylate-containing xenobiotics, e.g. benzoate. Also catalyzes the activation of lipoate to lipoyl-nucleoside monophosphate. Activates lipoate with GTP at a 1000-fold higher rate than with ATP and activates both (R)- and (S)-lipoate to the respective lipoyl-GMP, with a preference for (R)-lipoate. The sequence is that of Acyl-coenzyme A synthetase ACSM1, mitochondrial (Acsm1) from Mus musculus (Mouse).